Reading from the N-terminus, the 356-residue chain is GTPase Obg (356 aa).

The Obg domain occupies 1–159 (MKFIDRVKIH…RWLRLELKLL (159 aa)). One can recognise an OBG-type G domain in the interval 160–331 (ADVGLLGMPN…LVAEVARELE (172 aa)). Residues 166 to 173 (GMPNAGKS), 191 to 195 (FTTLV), 213 to 216 (DIPG), 283 to 286 (SKID), and 312 to 314 (SAV) each bind GTP. Mg(2+) contacts are provided by serine 173 and threonine 193.

The protein belongs to the TRAFAC class OBG-HflX-like GTPase superfamily. OBG GTPase family. As to quaternary structure, monomer. Mg(2+) is required as a cofactor.

Its subcellular location is the cytoplasm. Its function is as follows. An essential GTPase which binds GTP, GDP and possibly (p)ppGpp with moderate affinity, with high nucleotide exchange rates and a fairly low GTP hydrolysis rate. Plays a role in control of the cell cycle, stress response, ribosome biogenesis and in those bacteria that undergo differentiation, in morphogenesis control. In Syntrophotalea carbinolica (strain DSM 2380 / NBRC 103641 / GraBd1) (Pelobacter carbinolicus), this protein is GTPase Obg.